The primary structure comprises 331 residues: Inositol 2-dehydrogenase (331 aa).

This sequence belongs to the Gfo/Idh/MocA family. As to quaternary structure, homotetramer.

It carries out the reaction myo-inositol + NAD(+) = scyllo-inosose + NADH + H(+). Its function is as follows. Involved in the oxidation of myo-inositol (MI) to 2-keto-myo-inositol (2KMI or 2-inosose). This chain is Inositol 2-dehydrogenase, found in Renibacterium salmoninarum (strain ATCC 33209 / DSM 20767 / JCM 11484 / NBRC 15589 / NCIMB 2235).